Here is a 571-residue protein sequence, read N- to C-terminus: Origin recognition complex subunit 5 (571 aa).

Disordered stretches follow at residues 90 to 142 and 404 to 430; these read DDEY…YDDD and QIYPPQQVPQQQKQQEKEKEKEKGRQL. 2 stretches are compositionally biased toward low complexity: residues 107–133 and 407–416; these read NNNNNNNNNNNNNNNNNNNNNNNNNND and PPQQVPQQQK. Residues 417 to 428 show a composition bias toward basic and acidic residues; that stretch reads QQEKEKEKEKGR.

It belongs to the ORC1 family. In terms of assembly, ORC is composed of six subunits.

It is found in the nucleus. Functionally, component of the origin recognition complex (ORC) that binds origins of replication. DNA-binding is ATP-dependent, however specific DNA sequences that define origins of replication have not been identified so far. ORC is required to assemble the pre-replication complex necessary to initiate DNA replication. This is Origin recognition complex subunit 5 (orcE) from Dictyostelium discoideum (Social amoeba).